Here is a 326-residue protein sequence, read N- to C-terminus: Glyceraldehyde-3-phosphate dehydrogenase, cytosolic (326 aa).

NAD(+) is bound by residues 2–3, Asp-24, and Arg-71; that span reads RI. D-glyceraldehyde 3-phosphate is bound by residues 142–144, Thr-173, 202–203, and Arg-225; these read SCT and TG. Cys-143 (nucleophile) is an active-site residue. NAD(+) is bound at residue Asn-307.

This sequence belongs to the glyceraldehyde-3-phosphate dehydrogenase family.

The protein resides in the cytoplasm. The catalysed reaction is D-glyceraldehyde 3-phosphate + phosphate + NAD(+) = (2R)-3-phospho-glyceroyl phosphate + NADH + H(+). It participates in carbohydrate degradation; glycolysis; pyruvate from D-glyceraldehyde 3-phosphate: step 1/5. Key enzyme in glycolysis that catalyzes the first step of the pathway by converting D-glyceraldehyde 3-phosphate (G3P) into 3-phospho-D-glyceroyl phosphate. Essential for the maintenance of cellular ATP levels and carbohydrate metabolism. This Nicotiana tabacum (Common tobacco) protein is Glyceraldehyde-3-phosphate dehydrogenase, cytosolic (GAPC).